The following is a 293-amino-acid chain: MGVVNELRQRTWSGMLNVEVVLNPKLVVQGMPDEQVRCHLRIPRESYLVLHLPFVLNKLRGVLRQEVKDAFHGWWFGMEDVLVHWNHPVGTLYDSLVGLRPQERAAQFQANTLTMWTLTLNYSEDARDGSVPLVGGMQQVEDFWRHQWKQACYIIHGSSKQIMSLSIPDSKTFWDCVLQRDERVFRGIASRITARKGGVKALPVRIHQTTLRELRTLQPTVKPGEWGGGTLGELLRAELPECFKNGSVLRPVVHGIEVSPESQLADLYHLFCSFDGFLHISICSPVALIIPTT.

Residue K149 forms a Glycyl lysine isopeptide (Lys-Gly) (interchain with G-Cter in ATG12) linkage.

Belongs to the ATG5 family. Conjugated with ATG12. Post-translationally, conjugated to ATG12; which is essential for autophagy.

Its subcellular location is the preautophagosomal structure membrane. Functionally, involved in cytoplasm to vacuole transport (Cvt) and autophagic vesicle formation. Autophagy is essential for maintenance of amino acid levels and protein synthesis under nitrogen starvation. Required for selective autophagic degradation of the nucleus (nucleophagy). Also required for mitophagy, which eliminates defective or superfluous mitochondria in order to fulfill cellular energy requirements and prevent excess ROS production. Conjugation with ATG12, through a ubiquitin-like conjugating system involving ATG7 as an E1-like activating enzyme and ATG10 as an E2-like conjugating enzyme, is essential for its function. The ATG12-ATG5 conjugate acts as an E3-like enzyme which is required for lipidation of ATG8 and ATG8 association to the vesicle membranes. This chain is Autophagy protein 5 (ATG5), found in Eremothecium gossypii (strain ATCC 10895 / CBS 109.51 / FGSC 9923 / NRRL Y-1056) (Yeast).